The following is a 124-amino-acid chain: Putative membrane protein insertion efficiency factor (124 aa).

The segment at 1–24 (MHDPHGHAHTVRPPGRGRNWPGPW) is disordered. Residues 12–24 (RPPGRGRNWPGPW) show a composition bias toward low complexity.

The protein belongs to the UPF0161 family.

It is found in the cell inner membrane. Its function is as follows. Could be involved in insertion of integral membrane proteins into the membrane. The chain is Putative membrane protein insertion efficiency factor from Mesorhizobium japonicum (strain LMG 29417 / CECT 9101 / MAFF 303099) (Mesorhizobium loti (strain MAFF 303099)).